The chain runs to 519 residues: Protein BANP (519 aa).

3 positions are modified to phosphoserine: serine 19, serine 90, and serine 100. Positions 53-90 form a coiled coil; the sequence is IKTICLRLDSIEAKLQALEATCKSLEEKLDLVTNKQHS. Lysine 133 participates in a covalent cross-link: Glycyl lysine isopeptide (Lys-Gly) (interchain with G-Cter in SUMO2). The interaction with CUX1 and HDAC1 stretch occupies residues 152-342; the sequence is NAVPGRRQNT…FSRRTPNSSS (191 aa). Basic and acidic residues predominate over residues 168 to 177; the sequence is GQEDSHHEDG. The tract at residues 168–196 is disordered; sequence GQEDSHHEDGESGSEASDSVSSCGQAGSQ. Residues 180 to 189 are compositionally biased toward low complexity; sequence GSEASDSVSS. One can recognise a BEN domain in the interval 226-322; the sequence is EMRVRCAIIP…SKCRTAWRRK (97 aa). Lysine 275 carries the post-translational modification N6-acetyllysine. Residues 327–364 are disordered; sequence SLAVKSFSRRTPNSSSYCPSEPMMSTPPPASELPQPQP. Positions 335-344 are enriched in polar residues; the sequence is RRTPNSSSYC. Residues threonine 337 and threonine 352 each carry the phosphothreonine modification. Residues 342-393 form a DNA-binding region; sequence SYCPSEPMMSTPPPASELPQPQPQPQALHYALANAQQVQIHQIGEDGQVQVG. A compositionally biased stretch (pro residues) spans 351–364; it reads STPPPASELPQPQP.

Belongs to the BANP/SMAR1 family. Part of a corepressor complex containing BANP, HDAC1, SIN3A, SIN3B, RBL1 and RBL2. Forms a trimeric complex in the nucleus consisting of BANP, HDAC6 and KHDRBS1/SAM68; HDAC6 keeps KHDRBS1 in a deacetylated state which inhibits the inclusion of CD44 alternate exons. The complex is disrupted by MAPK1/MAPK3-mediated phosphorylation of BANP which results in BANP export to the cytoplasm. This facilitates acetylation of KHDRBS1 and CD44 variant exon inclusion. Interacts with TP53. Interacts with CUX1/CDP. Interacts with HDAC1. MAPK1/MAPK3-mediated phosphorylation at Thr-337 and Thr-352 results in export to the cytoplasm. In terms of tissue distribution, down-regulated in breast cancer cell lines.

It is found in the nucleus. The protein resides in the nucleus speckle. It localises to the cytoplasm. In terms of biological role, controls V(D)J recombination during T-cell development by repressing T-cell receptor (TCR) beta enhancer function. Binds to scaffold/matrix attachment region beta (S/MARbeta), an ATC-rich DNA sequence located upstream of the TCR beta enhancer. Represses cyclin D1 transcription by recruiting HDAC1 to its promoter, thereby diminishing H3K9ac, H3S10ph and H4K8ac levels. Promotes TP53 activation, which causes cell cycle arrest. Plays a role in the regulation of alternative splicing. Binds to CD44 pre-mRNA and negatively regulates the inclusion of CD44 proximal variable exons v2-v6 but has no effect on distal variable exons v7-v10. The polypeptide is Protein BANP (BANP) (Homo sapiens (Human)).